The following is a 279-amino-acid chain: Tryptophan 2,3-dioxygenase (279 aa).

Substrate is bound by residues 48–52 (FIVIH), Tyr110, and Arg114. Residue His237 participates in heme binding. Position 251 (Thr251) interacts with substrate.

The protein belongs to the tryptophan 2,3-dioxygenase family. Homotetramer. Requires heme as cofactor.

It catalyses the reaction L-tryptophan + O2 = N-formyl-L-kynurenine. It functions in the pathway amino-acid degradation; L-tryptophan degradation via kynurenine pathway; L-kynurenine from L-tryptophan: step 1/2. Its function is as follows. Heme-dependent dioxygenase that catalyzes the oxidative cleavage of the L-tryptophan (L-Trp) pyrrole ring and converts L-tryptophan to N-formyl-L-kynurenine. Catalyzes the oxidative cleavage of the indole moiety. This is Tryptophan 2,3-dioxygenase from Bacillus cereus (strain ZK / E33L).